A 218-amino-acid polypeptide reads, in one-letter code: 3,4-dihydroxy-2-butanone 4-phosphate synthase (218 aa).

D-ribulose 5-phosphate is bound by residues 38-39 (RE), D43, 151-155 (RRGHT), and E175. Residue E39 participates in Mg(2+) binding. H154 provides a ligand contact to Mg(2+).

It belongs to the DHBP synthase family. In terms of assembly, homodimer. Mg(2+) serves as cofactor. It depends on Mn(2+) as a cofactor.

The enzyme catalyses D-ribulose 5-phosphate = (2S)-2-hydroxy-3-oxobutyl phosphate + formate + H(+). Its pathway is cofactor biosynthesis; riboflavin biosynthesis; 2-hydroxy-3-oxobutyl phosphate from D-ribulose 5-phosphate: step 1/1. Functionally, catalyzes the conversion of D-ribulose 5-phosphate to formate and 3,4-dihydroxy-2-butanone 4-phosphate. The polypeptide is 3,4-dihydroxy-2-butanone 4-phosphate synthase (Vibrio vulnificus (strain CMCP6)).